The following is a 468-amino-acid chain: Citrate synthase, mitochondrial (468 aa).

A mitochondrion-targeting transit peptide spans 1–30 (MSLITAGRLCARILGAKNSPCALIAARQAS). Catalysis depends on residues histidine 303 and histidine 349. An oxaloacetate-binding site is contributed by arginine 358. The active site involves aspartate 404. Arginine 430 and arginine 450 together coordinate oxaloacetate.

Belongs to the citrate synthase family. Homodimer.

It localises to the mitochondrion matrix. The enzyme catalyses oxaloacetate + acetyl-CoA + H2O = citrate + CoA + H(+). It participates in carbohydrate metabolism; tricarboxylic acid cycle; isocitrate from oxaloacetate: step 1/2. In terms of biological role, key enzyme of the Krebs tricarboxylic acid cycle which catalyzes the synthesis of citrate from acetyl coenzyme A and oxaloacetate. This chain is Citrate synthase, mitochondrial (cs), found in Xenopus tropicalis (Western clawed frog).